Here is a 443-residue protein sequence, read N- to C-terminus: Thymidine phosphorylase (443 aa).

The protein belongs to the thymidine/pyrimidine-nucleoside phosphorylase family. As to quaternary structure, homodimer.

The catalysed reaction is thymidine + phosphate = 2-deoxy-alpha-D-ribose 1-phosphate + thymine. Its pathway is pyrimidine metabolism; dTMP biosynthesis via salvage pathway; dTMP from thymine: step 1/2. In terms of biological role, the enzymes which catalyze the reversible phosphorolysis of pyrimidine nucleosides are involved in the degradation of these compounds and in their utilization as carbon and energy sources, or in the rescue of pyrimidine bases for nucleotide synthesis. In Aeromonas salmonicida (strain A449), this protein is Thymidine phosphorylase.